The chain runs to 130 residues: Small ribosomal subunit protein uS11 (130 aa).

The protein belongs to the universal ribosomal protein uS11 family. Part of the 30S ribosomal subunit. Interacts with proteins S7 and S18. Binds to IF-3.

Its function is as follows. Located on the platform of the 30S subunit, it bridges several disparate RNA helices of the 16S rRNA. Forms part of the Shine-Dalgarno cleft in the 70S ribosome. The sequence is that of Small ribosomal subunit protein uS11 from Acholeplasma laidlawii (strain PG-8A).